A 299-amino-acid chain; its full sequence is Probable 4-deoxy-4-formamido-L-arabinose-phosphoundecaprenol deformylase ArnD (299 aa).

The 262-residue stretch at isoleucine 2 to valine 263 folds into the NodB homology domain.

It belongs to the polysaccharide deacetylase family. ArnD deformylase subfamily.

The catalysed reaction is 4-deoxy-4-formamido-alpha-L-arabinopyranosyl di-trans,octa-cis-undecaprenyl phosphate + H2O = 4-amino-4-deoxy-alpha-L-arabinopyranosyl di-trans,octa-cis-undecaprenyl phosphate + formate. The protein operates within glycolipid biosynthesis; 4-amino-4-deoxy-alpha-L-arabinose undecaprenyl phosphate biosynthesis; 4-amino-4-deoxy-alpha-L-arabinose undecaprenyl phosphate from UDP-4-deoxy-4-formamido-beta-L-arabinose and undecaprenyl phosphate: step 2/2. It participates in bacterial outer membrane biogenesis; lipopolysaccharide biosynthesis. In terms of biological role, catalyzes the deformylation of 4-deoxy-4-formamido-L-arabinose-phosphoundecaprenol to 4-amino-4-deoxy-L-arabinose-phosphoundecaprenol. The modified arabinose is attached to lipid A and is required for resistance to polymyxin and cationic antimicrobial peptides. This Aeromonas salmonicida (strain A449) protein is Probable 4-deoxy-4-formamido-L-arabinose-phosphoundecaprenol deformylase ArnD.